Consider the following 130-residue polypeptide: Small ribosomal subunit protein uS11c (130 aa).

It belongs to the universal ribosomal protein uS11 family. Part of the 30S ribosomal subunit.

The protein resides in the plastid. It localises to the chloroplast. In Pyropia yezoensis (Susabi-nori), this protein is Small ribosomal subunit protein uS11c.